The following is a 332-amino-acid chain: L-lactate dehydrogenase A chain (332 aa).

Residue Ala2 is modified to N-acetylalanine. Lys5 carries the post-translational modification N6-acetyllysine; alternate. Lys5 carries the N6-succinyllysine; alternate modification. An N6-acetyllysine modification is found at Lys14. 29–57 (GAVGMACAISILMKDLADEVALVDVMEDK) contributes to the NAD(+) binding site. Lys57 carries the post-translational modification N6-acetyllysine; alternate. Lys57 participates in a covalent cross-link: Glycyl lysine isopeptide (Lys-Gly) (interchain with G-Cter in SUMO2); alternate. Lys81 carries the post-translational modification N6-acetyllysine. A substrate-binding site is contributed by Arg106. Lys118 carries the N6-acetyllysine; alternate modification. Lys118 carries the N6-succinyllysine; alternate modification. Lys126 bears the N6-acetyllysine mark. Asn138 provides a ligand contact to NAD(+). 2 residues coordinate substrate: Asn138 and Arg169. His193 (proton acceptor) is an active-site residue. N6-acetyllysine is present on residues Lys224 and Lys232. The residue at position 239 (Tyr239) is a Phosphotyrosine. At Lys243 the chain carries N6-acetyllysine. A substrate-binding site is contributed by Thr248. Thr309 carries the phosphothreonine modification. Lys318 is modified (N6-acetyllysine; alternate). Position 318 is an N6-succinyllysine; alternate (Lys318). The residue at position 322 (Thr322) is a Phosphothreonine.

This sequence belongs to the LDH/MDH superfamily. LDH family. Homotetramer. Interacts with PTEN upstream reading frame protein MP31. ISGylated.

It localises to the cytoplasm. It catalyses the reaction (S)-lactate + NAD(+) = pyruvate + NADH + H(+). It participates in fermentation; pyruvate fermentation to lactate; (S)-lactate from pyruvate: step 1/1. In terms of biological role, interconverts simultaneously and stereospecifically pyruvate and lactate with concomitant interconversion of NADH and NAD(+). The protein is L-lactate dehydrogenase A chain (LDHA) of Bos taurus (Bovine).